We begin with the raw amino-acid sequence, 160 residues long: Adenosine 5'-monophosphoramidase HINT3 (160 aa).

The HIT domain occupies 24 to 132; sequence IFCTIAKGDD…LAPYSQLYKW (109 aa). Residues 50-51 and 119-121 contribute to the AMP site; these read DI and HLH. Residues 117–121 carry the Histidine triad motif motif; the sequence is HLHLH. Residue histidine 119 is the Tele-AMP-histidine intermediate of the active site.

The protein belongs to the HINT family. In terms of assembly, forms dimers to octamers and even larger oligomer.

It is found in the cytoplasm. The protein resides in the nucleus. The catalysed reaction is adenosine 5'-phosphoramidate + H2O = AMP + NH4(+). Its function is as follows. Exhibits adenosine 5'-monophosphoramidase activity, hydrolyzing purine nucleotide phosphoramidates with a single phosphate group such as adenosine 5'monophosphoramidate (AMP-NH2) to yield AMP and NH2. Hydrolyzes lysyl-AMP (AMP-N-epsilon-(N-alpha-acetyl lysine methyl ester)) generated by lysine tRNA ligase. The sequence is that of Adenosine 5'-monophosphoramidase HINT3 (hint3) from Danio rerio (Zebrafish).